The chain runs to 273 residues: Large ribosomal subunit protein uL2 (273 aa).

Disordered regions lie at residues 35-54 (DSKS…TRHI) and 222-273 (GMAM…RRNK). Over residues 39 to 49 (KSGGRNNNGRI) the composition is skewed to polar residues. Over residues 229–239 (DHPHGGGEGRN) the composition is skewed to basic and acidic residues. The span at 253-273 (KGFKTRKNKRTDKYIVRRRNK) shows a compositional bias: basic residues.

The protein belongs to the universal ribosomal protein uL2 family. In terms of assembly, part of the 50S ribosomal subunit. Forms a bridge to the 30S subunit in the 70S ribosome.

One of the primary rRNA binding proteins. Required for association of the 30S and 50S subunits to form the 70S ribosome, for tRNA binding and peptide bond formation. It has been suggested to have peptidyltransferase activity; this is somewhat controversial. Makes several contacts with the 16S rRNA in the 70S ribosome. This is Large ribosomal subunit protein uL2 from Aeromonas salmonicida (strain A449).